The sequence spans 242 residues: Protein HTATIP2 (242 aa).

Position 2 is an N-acetylalanine (A2). Residues 2-25 (ADKETLLKLREDFKMQNKSVFILG) are required for interaction with elongation factor EEF1A1. NADPH is bound by residues S27, G28, E29, T30, R52, R53, L92, G93, Y143, K147, L170, and R178. Catalysis depends on Y143, which acts as the Proton acceptor. K147 is an active-site residue.

As to quaternary structure, monomer. Forms homodimers during oxidative stress. Interacts (via N-terminus) with elongation factor EEF1A1 (via middle-region); the interaction is direct and competes with EEF1A1 binding to guanyl-nucleotide exchange factor EEF1B2, thereby inhibiting GDP for GTP exchange and reactivation of EEF1A1. Interacts with nuclear transport receptors XPO4, IPO5/RANBP5, IPO7, IPO9 and KPNB1 as well as GCN1L1/GCN1 and LRPPRC probably through their HEAT repeats. Binds NCOA5/CIA.

Represses translation by preventing reactivation of elongation factor eEF1A. May also inhibit nuclear import by competing with nuclear import substrates for binding to a subset of nuclear transport receptors. Has additionally been proposed to act as a redox sensor involved in cellular oxidative stress surveillance. May bind NADPH. This Rattus norvegicus (Rat) protein is Protein HTATIP2.